Here is a 463-residue protein sequence, read N- to C-terminus: tRNA modification GTPase MnmE (463 aa).

Residues Arg-30, Glu-92, and Arg-132 each contribute to the (6S)-5-formyl-5,6,7,8-tetrahydrofolate site. A TrmE-type G domain is found at 227–386; the sequence is GLRVALVGRP…LVQAVLERCG (160 aa). Asn-237 contacts K(+). Residues 237-242, 256-262, 281-284, and 342-345 contribute to the GTP site; these read NVGKSS, TDLPGTT, DTAG, and NKAD. Position 241 (Ser-241) interacts with Mg(2+). Residues Thr-256, Leu-258, and Thr-261 each contribute to the K(+) site. Thr-262 contacts Mg(2+). Lys-463 provides a ligand contact to (6S)-5-formyl-5,6,7,8-tetrahydrofolate.

This sequence belongs to the TRAFAC class TrmE-Era-EngA-EngB-Septin-like GTPase superfamily. TrmE GTPase family. In terms of assembly, homodimer. Heterotetramer of two MnmE and two MnmG subunits. K(+) is required as a cofactor.

The protein resides in the cytoplasm. Functionally, exhibits a very high intrinsic GTPase hydrolysis rate. Involved in the addition of a carboxymethylaminomethyl (cmnm) group at the wobble position (U34) of certain tRNAs, forming tRNA-cmnm(5)s(2)U34. This chain is tRNA modification GTPase MnmE, found in Synechococcus sp. (strain CC9311).